The sequence spans 408 residues: MFSCFNNLGLDYCYQCMHGPEGCMVPSRQGDGGELYAHSEELEAKLRGLAKKESLEIEKSLENDKKTYGSHIKILILGGPSSGKSTIFKQMQIIHSNGFKTEQELIQYRGLIDTNIRQTYRQLVSGARVVGISLESLESLVHDINKVYAPMAADEFSIRTIPDVVEPLTAFWNSREIQEVYKRRYEFELLDSTKYYLENLNRISKSDYLPNEEDIVHSRKATVSINSIVFQYTGVSLLMVDVGGQRSERKKWLHLFDDAKVVIFVIDLTGYAKKSEESRTELSRFPNFFNEIGNDAFDMKVALKIFNDVAGSHALANAVFLLFFNKVDLFKELLPQVSLQPCFSKFAEENSYDNTSKFICDKFIRAAKPKKSVFPHFTTATNTENIKMVFRACMESVFKANSKATGLS.

GTP-binding positions include 38-45 (HSEELEAK), 78-85 (GGPSSGKS), 201-205 (NRISK), 216-222 (VHSRKAT), 241-245 (DVGGQ), 285-288 (FPNF), 325-328 (NKVD), and Ala380. One can recognise a G-alpha domain in the interval 70–408 (SHIKILILGG…KANSKATGLS (339 aa)). Positions 73-86 (KILILGGPSSGKST) are G1 motif. A Mg(2+)-binding site is contributed by Ser85. Positions 214 to 222 (DIVHSRKAT) are G2 motif. A Mg(2+)-binding site is contributed by Thr222. The segment at 237–246 (LLMVDVGGQR) is G3 motif. The G4 motif stretch occupies residues 321–328 (LLFFNKVD). The G5 motif stretch occupies residues 378–383 (TTATNT).

Belongs to the G-alpha family. As to quaternary structure, g proteins are composed of 3 units; alpha, beta and gamma. The alpha chain contains the guanine nucleotide binding site.

In terms of biological role, guanine nucleotide-binding proteins (G proteins) are involved as modulators or transducers in various transmembrane signaling systems. This chain is Guanine nucleotide-binding protein alpha-14 subunit (gpa-14), found in Caenorhabditis briggsae.